The sequence spans 82 residues: DNA-directed RNA polymerase subunit Rpo5 (82 aa).

Belongs to the archaeal Rpo5/eukaryotic RPB5 RNA polymerase subunit family. Part of the RNA polymerase complex.

Its subcellular location is the cytoplasm. It catalyses the reaction RNA(n) + a ribonucleoside 5'-triphosphate = RNA(n+1) + diphosphate. In terms of biological role, DNA-dependent RNA polymerase (RNAP) catalyzes the transcription of DNA into RNA using the four ribonucleoside triphosphates as substrates. This Thermococcus kodakarensis (strain ATCC BAA-918 / JCM 12380 / KOD1) (Pyrococcus kodakaraensis (strain KOD1)) protein is DNA-directed RNA polymerase subunit Rpo5.